Consider the following 164-residue polypeptide: Phosphopantetheine adenylyltransferase (164 aa).

Residue Ser9 participates in substrate binding. ATP-binding positions include 9–10 and His17; that span reads SF. 3 residues coordinate substrate: Lys41, Leu73, and Lys87. ATP contacts are provided by residues 88–90, Glu98, and 123–129; these read GLR and YSYLSSS.

It belongs to the bacterial CoaD family. As to quaternary structure, homohexamer. Mg(2+) serves as cofactor.

Its subcellular location is the cytoplasm. It carries out the reaction (R)-4'-phosphopantetheine + ATP + H(+) = 3'-dephospho-CoA + diphosphate. Its pathway is cofactor biosynthesis; coenzyme A biosynthesis; CoA from (R)-pantothenate: step 4/5. In terms of biological role, reversibly transfers an adenylyl group from ATP to 4'-phosphopantetheine, yielding dephospho-CoA (dPCoA) and pyrophosphate. This Clostridium botulinum (strain 657 / Type Ba4) protein is Phosphopantetheine adenylyltransferase.